We begin with the raw amino-acid sequence, 361 residues long: 45 kDa calcium-binding protein (361 aa).

An N-terminal signal peptide occupies residues 1–35 (MVWLVAMTPRQSSLCGLAAHGLWFLGLVLLMDATA). An N-linked (GlcNAc...) asparagine glycan is attached at asparagine 39. EF-hand domains follow at residues 97–132 (RSRR…KTAE) and 136–171 (EAVK…SKGH). Serine 98 is modified (phosphoserine). Aspartate 110, asparagine 112, aspartate 114, arginine 116, glutamate 121, aspartate 149, aspartate 151, aspartate 153, histidine 155, and glutamate 160 together coordinate Ca(2+). The residue at position 192 (threonine 192) is a Phosphothreonine. 4 EF-hand domains span residues 196–231 (LGNL…HSRG), 232–267 (MLKF…TVEN), 277–312 (WVKD…MNEY), and 313–348 (NALN…FTGS). Aspartate 212 serves as a coordination point for Ca(2+). Threonine 216 carries the post-translational modification Phosphothreonine. 6 residues coordinate Ca(2+): glutamate 219, aspartate 245, aspartate 247, aspartate 249, glutamine 251, and glutamate 256. Threonine 264 carries the phosphothreonine modification. The Ca(2+) site is built by aspartate 290, asparagine 292, and aspartate 294. At threonine 298 the chain carries Phosphothreonine. Residues glutamate 301, aspartate 326, asparagine 328, asparagine 330, histidine 332, and glutamate 337 each coordinate Ca(2+). The necessary for intracellular retention in Golgi apparatus lumen stretch occupies residues 308–361 (PMNEYNALNEAKQMIAIADENQNHHLEPEEILKYSEFFTGSKLMDYARNVHEEF).

The protein belongs to the CREC family. In terms of tissue distribution, ubiquitous.

Its subcellular location is the golgi apparatus lumen. Functionally, may regulate calcium-dependent activities in the endoplasmic reticulum lumen or post-ER compartment. This chain is 45 kDa calcium-binding protein (Sdf4), found in Mus musculus (Mouse).